The primary structure comprises 313 residues: tRNA dimethylallyltransferase (313 aa).

Glycine 9–serine 16 contributes to the ATP binding site. Threonine 11–serine 16 serves as a coordination point for substrate.

This sequence belongs to the IPP transferase family. As to quaternary structure, monomer. The cofactor is Mg(2+).

The enzyme catalyses adenosine(37) in tRNA + dimethylallyl diphosphate = N(6)-dimethylallyladenosine(37) in tRNA + diphosphate. Catalyzes the transfer of a dimethylallyl group onto the adenine at position 37 in tRNAs that read codons beginning with uridine, leading to the formation of N6-(dimethylallyl)adenosine (i(6)A). The sequence is that of tRNA dimethylallyltransferase from Nocardia farcinica (strain IFM 10152).